The chain runs to 69 residues: Large ribosomal subunit protein bL28 (69 aa).

The protein belongs to the bacterial ribosomal protein bL28 family.

In Nitratidesulfovibrio vulgaris (strain DSM 19637 / Miyazaki F) (Desulfovibrio vulgaris), this protein is Large ribosomal subunit protein bL28.